Consider the following 20-residue polypeptide: Phospholipase A2 D5 (20 aa).

Ca(2+) serves as cofactor. In terms of processing, contains seven disulfide bonds. As to expression, expressed by the venom gland.

The protein localises to the secreted. The enzyme catalyses a 1,2-diacyl-sn-glycero-3-phosphocholine + H2O = a 1-acyl-sn-glycero-3-phosphocholine + a fatty acid + H(+). In terms of biological role, PLA2 catalyzes the calcium-dependent hydrolysis of the 2-acyl groups in 3-sn-phosphoglycerides. The sequence is that of Phospholipase A2 D5 from Micrurus pyrrhocryptus (Coral snake).